A 156-amino-acid polypeptide reads, in one-letter code: Cyclic pyranopterin monophosphate synthase (156 aa).

Residues 75 to 77 (LCH) and 111 to 112 (ME) contribute to the substrate site. D126 is a catalytic residue.

This sequence belongs to the MoaC family. In terms of assembly, homohexamer; trimer of dimers.

The catalysed reaction is (8S)-3',8-cyclo-7,8-dihydroguanosine 5'-triphosphate = cyclic pyranopterin phosphate + diphosphate. Its pathway is cofactor biosynthesis; molybdopterin biosynthesis. Catalyzes the conversion of (8S)-3',8-cyclo-7,8-dihydroguanosine 5'-triphosphate to cyclic pyranopterin monophosphate (cPMP). This Corynebacterium glutamicum (strain ATCC 13032 / DSM 20300 / JCM 1318 / BCRC 11384 / CCUG 27702 / LMG 3730 / NBRC 12168 / NCIMB 10025 / NRRL B-2784 / 534) protein is Cyclic pyranopterin monophosphate synthase.